Consider the following 271-residue polypeptide: 3-methyl-2-oxobutanoate hydroxymethyltransferase (271 aa).

Residues Asp51 and Asp90 each contribute to the Mg(2+) site. Residues Asp51 to Ser52, Asp90, and Lys118 each bind 3-methyl-2-oxobutanoate. Glu120 is a Mg(2+) binding site. The active-site Proton acceptor is Glu186.

This sequence belongs to the PanB family. In terms of assembly, homodecamer; pentamer of dimers. Mg(2+) is required as a cofactor.

The protein resides in the cytoplasm. The enzyme catalyses 3-methyl-2-oxobutanoate + (6R)-5,10-methylene-5,6,7,8-tetrahydrofolate + H2O = 2-dehydropantoate + (6S)-5,6,7,8-tetrahydrofolate. It participates in cofactor biosynthesis; (R)-pantothenate biosynthesis; (R)-pantoate from 3-methyl-2-oxobutanoate: step 1/2. In terms of biological role, catalyzes the reversible reaction in which hydroxymethyl group from 5,10-methylenetetrahydrofolate is transferred onto alpha-ketoisovalerate to form ketopantoate. The chain is 3-methyl-2-oxobutanoate hydroxymethyltransferase from Xanthomonas oryzae pv. oryzae (strain PXO99A).